Consider the following 656-residue polypeptide: Acetyl-coenzyme A synthetase (656 aa).

CoA-binding positions include 198-201 (RGGR) and T316. Residues 392-394 (GEP), 416-421 (DTFWQT), D507, and R522 contribute to the ATP site. S530 is a binding site for CoA. Position 533 (R533) interacts with ATP. 3 residues coordinate Mg(2+): V544, H546, and V549. Residue R591 participates in CoA binding. K616 carries the post-translational modification N6-acetyllysine.

It belongs to the ATP-dependent AMP-binding enzyme family. It depends on Mg(2+) as a cofactor. In terms of processing, acetylated. Deacetylation by the SIR2-homolog deacetylase activates the enzyme.

The catalysed reaction is acetate + ATP + CoA = acetyl-CoA + AMP + diphosphate. Catalyzes the conversion of acetate into acetyl-CoA (AcCoA), an essential intermediate at the junction of anabolic and catabolic pathways. AcsA undergoes a two-step reaction. In the first half reaction, AcsA combines acetate with ATP to form acetyl-adenylate (AcAMP) intermediate. In the second half reaction, it can then transfer the acetyl group from AcAMP to the sulfhydryl group of CoA, forming the product AcCoA. This is Acetyl-coenzyme A synthetase from Rhodobacter capsulatus (strain ATCC BAA-309 / NBRC 16581 / SB1003).